A 298-amino-acid chain; its full sequence is MKSPFSRFFGGGSKTEPIVKNEVEQAEAVHTAEEVIKLPIDQIVPNRFQPRTIFDDEKIEELSRTIHTHGVIQPIVVRKTSENQYEIIAGERRYRAMKKLQWTEVPAIVRNLTDKETASIALIENLQREELTAIEEAVAYQKLLELHELTQEALAQRLGKGQSTVANKLRLLRLPDEVQQAILQRKISERHARALIAIKDQPLQLEVLQQTVDNDWNVRQLEEQIQAILHPVTDEQESVPKKAKPKRKAISKDVRIALNTIKQSLTMVTKSGITVKTEEEDTEEYYQITVKIPKKKKV.

The segment at residues 152-171 (EALAQRLGKGQSTVANKLRL) is a DNA-binding region (H-T-H motif).

It belongs to the ParB family.

Its subcellular location is the cytoplasm. The protein resides in the nucleoid. Functionally, effects nucleoid occlusion by binding relatively nonspecifically to DNA and preventing the assembly of the division machinery in the vicinity of the nucleoid, especially under conditions that disturb the cell cycle. It helps to coordinate cell division and chromosome segregation by preventing the formation of the Z ring through the nucleoid, which would cause chromosome breakage. The polypeptide is Nucleoid occlusion protein (Lysinibacillus sphaericus (strain C3-41)).